The chain runs to 309 residues: Elongation factor Ts (309 aa).

An involved in Mg(2+) ion dislocation from EF-Tu region spans residues 80–83 (TDFV).

This sequence belongs to the EF-Ts family.

The protein resides in the cytoplasm. In terms of biological role, associates with the EF-Tu.GDP complex and induces the exchange of GDP to GTP. It remains bound to the aminoacyl-tRNA.EF-Tu.GTP complex up to the GTP hydrolysis stage on the ribosome. This chain is Elongation factor Ts, found in Rhodospirillum rubrum (strain ATCC 11170 / ATH 1.1.1 / DSM 467 / LMG 4362 / NCIMB 8255 / S1).